A 103-amino-acid polypeptide reads, in one-letter code: Large ribosomal subunit protein bL21 (103 aa).

It belongs to the bacterial ribosomal protein bL21 family. As to quaternary structure, part of the 50S ribosomal subunit. Contacts protein L20.

Its function is as follows. This protein binds to 23S rRNA in the presence of protein L20. The sequence is that of Large ribosomal subunit protein bL21 from Pseudomonas aeruginosa (strain LESB58).